Consider the following 1189-residue polypeptide: Increased DNA methylation 1 (1189 aa).

Disordered stretches follow at residues 475–498 and 523–597; these read KNLHRRSKKISDIKPASLDQHDSL and SRDE…CRLL. A compositionally biased stretch (basic and acidic residues) spans 523–532; the sequence is SRDERLRNEK. Composition is skewed to basic residues over residues 541–550 and 565–590; these read KKGRKKARKH and NKGKFSRSSQKKKTQKPKARTKKRNN. The segment at 726–771 adopts a PHD-type 1 zinc-finger fold; it reads DDSCGVCGDGGELICCDNCPSTFHQACLSMQVLPEGSWYCSSCTCW. The segment at 767-823 adopts a PHD-type 2; degenerate zinc-finger fold; it reads SCTCWICSELVSDNAERSQDFKCSQCAHKYHGTCLQGISKRRKLFPETYFCGKNCEK. Positions 879–1024 constitute an N-acetyltransferase domain; that stretch reads MEESFLSMVD…GTTLLKKTLY (146 aa). Residues 1031-1157 are disordered; that stretch reads TMKGVCLSKE…SSSSAALEEV (127 aa). Composition is skewed to basic and acidic residues over residues 1038-1050, 1102-1114, and 1129-1145; these read SKERNNPSNKEAD, NPSRDSNANDRPN, and CLQKDVSKLSEEGKETT. Positions 1147-1157 are enriched in low complexity; it reads ASSSSAALEEV.

Interacts (via N-terminus) with IDM2. Interacts with IMD3. Part of a complex made of MBD7, IDM1, IDM2 and IDM3. As to expression, expressed in cotyledons and hypocotyls in young seedlings.

Its subcellular location is the nucleus. In terms of biological role, histone H3 acetyltransferase that binds methylated DNA at chromatin sites lacking histone H3K4 di- or trimethylation and catalyzes H3K18 and H3K23 acetylation. Prevents the transcriptional silencing of transgenes and of some endogenous genes. Requires the presence of IDM2 for efficient H3K18 acetylation, but not for H3K23 acetylation. The protein is Increased DNA methylation 1 of Arabidopsis thaliana (Mouse-ear cress).